A 330-amino-acid chain; its full sequence is Phenylalanine--tRNA ligase alpha subunit (330 aa).

Residue Glu-257 coordinates Mg(2+).

The protein belongs to the class-II aminoacyl-tRNA synthetase family. Phe-tRNA synthetase alpha subunit type 1 subfamily. As to quaternary structure, tetramer of two alpha and two beta subunits. Mg(2+) serves as cofactor.

The protein localises to the cytoplasm. It catalyses the reaction tRNA(Phe) + L-phenylalanine + ATP = L-phenylalanyl-tRNA(Phe) + AMP + diphosphate + H(+). This is Phenylalanine--tRNA ligase alpha subunit from Acaryochloris marina (strain MBIC 11017).